A 487-amino-acid chain; its full sequence is Cysteine--tRNA ligase (487 aa).

Cysteine 30 is a binding site for Zn(2+). The 'HIGH' region signature appears at 32-42 (PTVYGHAHLGH). Zn(2+) contacts are provided by cysteine 226, histidine 251, and glutamate 255. A 'KMSKS' region motif is present at residues 283–287 (KMGKS). Lysine 286 contributes to the ATP binding site.

It belongs to the class-I aminoacyl-tRNA synthetase family. In terms of assembly, monomer. Zn(2+) is required as a cofactor.

Its subcellular location is the cytoplasm. It carries out the reaction tRNA(Cys) + L-cysteine + ATP = L-cysteinyl-tRNA(Cys) + AMP + diphosphate. The chain is Cysteine--tRNA ligase (cysS) from Chlorobaculum tepidum (strain ATCC 49652 / DSM 12025 / NBRC 103806 / TLS) (Chlorobium tepidum).